Consider the following 399-residue polypeptide: DNA primase DnaG (399 aa).

In terms of domain architecture, Toprim spans 182-268 (DAIIVVEGRA…EVEDLTQKEI (87 aa)). Positions 188, 230, and 232 each coordinate Mg(2+).

It belongs to the archaeal DnaG primase family. As to quaternary structure, forms a ternary complex with MCM helicase and DNA. Component of the archaeal exosome complex. The cofactor is Mg(2+).

The enzyme catalyses ssDNA + n NTP = ssDNA/pppN(pN)n-1 hybrid + (n-1) diphosphate.. In terms of biological role, RNA polymerase that catalyzes the synthesis of short RNA molecules used as primers for DNA polymerase during DNA replication. Also part of the exosome, which is a complex involved in RNA degradation. Acts as a poly(A)-binding protein that enhances the interaction between heteromeric, adenine-rich transcripts and the exosome. This Archaeoglobus fulgidus (strain ATCC 49558 / DSM 4304 / JCM 9628 / NBRC 100126 / VC-16) protein is DNA primase DnaG.